The following is a 226-amino-acid chain: Cytidylate kinase (226 aa).

9–17 provides a ligand contact to ATP; sequence GPAGAGKST.

It belongs to the cytidylate kinase family. Type 1 subfamily.

The protein localises to the cytoplasm. The enzyme catalyses CMP + ATP = CDP + ADP. It carries out the reaction dCMP + ATP = dCDP + ADP. This chain is Cytidylate kinase, found in Clostridium tetani (strain Massachusetts / E88).